Consider the following 227-residue polypeptide: Fibrillarin-like rRNA/tRNA 2'-O-methyltransferase (227 aa).

S-adenosyl-L-methionine-binding positions include 82-83 (TT), 100-101 (EF), 125-126 (DA), and 145-148 (DVAQ).

It belongs to the methyltransferase superfamily. Fibrillarin family. Interacts with nop5. Component of box C/D small ribonucleoprotein (sRNP) particles that contain rpl7ae, FlpA and nop5, plus a guide RNA.

In terms of biological role, involved in pre-rRNA and tRNA processing. Utilizes the methyl donor S-adenosyl-L-methionine to catalyze the site-specific 2'-hydroxyl methylation of ribose moieties in rRNA and tRNA. Site specificity is provided by a guide RNA that base pairs with the substrate. Methylation occurs at a characteristic distance from the sequence involved in base pairing with the guide RNA. The polypeptide is Fibrillarin-like rRNA/tRNA 2'-O-methyltransferase (Methanosarcina acetivorans (strain ATCC 35395 / DSM 2834 / JCM 12185 / C2A)).